We begin with the raw amino-acid sequence, 91 residues long: C-C motif chemokine 5 (91 aa).

Residues 1–23 (MKVSAARLAVILVATALCAPASA) form the signal peptide. Intrachain disulfides connect Cys-33–Cys-57 and Cys-34–Cys-73.

This sequence belongs to the intercrine beta (chemokine CC) family.

It is found in the secreted. Chemoattractant for blood monocytes, memory T-helper cells and eosinophils. Causes the release of histamine from basophils and activates eosinophils. May activate several chemokine receptors including CCR1, CCR3, CCR4 and CCR5. May also be an agonist of the G protein-coupled receptor GPR75. Together with GPR75, may play a role in neuron survival through activation of a downstream signaling pathway involving the PI3, Akt and MAP kinases. By activating GPR75 may also play a role in insulin secretion by islet cells. This Macaca mulatta (Rhesus macaque) protein is C-C motif chemokine 5 (CCL5).